The sequence spans 527 residues: Acid-sensing ion channel 1 (527 aa).

Topologically, residues 1–49 (MMDLKVDEEEVDSGQPVSIQAFASSSTLHGISHIFSYERLSLKRVVWAL) are cytoplasmic. A helical transmembrane segment spans residues 50–71 (CFMGSLALLALVCTNRIQYYFL). Residues 72 to 424 (YPHVTKLDEV…NYETIEQKKA (353 aa)) lie on the Extracellular side of the membrane. 7 disulfides stabilise this stretch: cysteine 94-cysteine 195, cysteine 173-cysteine 180, cysteine 291-cysteine 366, cysteine 309-cysteine 362, cysteine 313-cysteine 360, cysteine 322-cysteine 344, and cysteine 324-cysteine 336. Asparagine 367 and asparagine 394 each carry an N-linked (GlcNAc...) asparagine glycan. The chain crosses the membrane as a discontinuously helical span at residues 425–454 (YEVAGLLGDIGGQMGLFIGASILTVLELFD). A GAS motif; ion selectivity filter motif is present at residues 443 to 445 (GAS). The Cytoplasmic segment spans residues 455–527 (YAYEVIKHRL…ARGTFEDFTC (73 aa)).

It belongs to the amiloride-sensitive sodium channel (TC 1.A.6) family. ASIC1 subfamily. Homotrimer. Heterotrimer; with other ASIC proteins producing channel with different properties.

The protein localises to the cell membrane. The protein resides in the postsynaptic cell membrane. Its subcellular location is the cell projection. It localises to the dendrite. It catalyses the reaction Na(+)(in) = Na(+)(out). The enzyme catalyses Li(+)(in) = Li(+)(out). It carries out the reaction K(+)(in) = K(+)(out). The catalysed reaction is Ca(2+)(in) = Ca(2+)(out). With respect to regulation, inhibited by the diuretic drug amiloride. Inhibited by Cs(1+) ions. Inhibited by the spider venom psalmotoxin-1; this locks the channel into its desensitized conformation. Channel activity is increased by the heterodimeric snake venom neurotoxin composed of MitTx-alpha and MitTx-beta; this slows channel closure and increases the magnitude of the steady-state current that is triggered by low pH. Forms voltage-independent, pH-gated trimeric sodium channels that act as postsynaptic excitatory receptors in the nervous system, playing a crucial role in regulating synaptic plasticity, learning, and memory. Upon extracellular pH drop this channel elicits transient, fast activating, and completely desensitizing inward currents. Displays high selectivity for sodium ions but can also permit the permeation of other cations. Regulates more or less directly intracellular calcium concentration and CaMKII phosphorylation, and thereby the density of dendritic spines. Modulates neuronal activity in the circuits underlying innate fear. The sequence is that of Acid-sensing ion channel 1 from Gallus gallus (Chicken).